The primary structure comprises 541 residues: Protein MGF 505-10R (541 aa).

The protein belongs to the asfivirus MGF 505 family.

In terms of biological role, plays a role in virus cell tropism, and may be required for efficient virus replication in macrophages. The polypeptide is Protein MGF 505-10R (Ornithodoros (relapsing fever ticks)).